The primary structure comprises 631 residues: tRNA uridine 5-carboxymethylaminomethyl modification enzyme MnmG (631 aa).

15 to 20 lines the FAD pocket; sequence GAGHAG. The interval 214-233 is disordered; sequence YSKTEEEPGDKEPRHFSFTS. Residue 276-290 participates in NAD(+) binding; that stretch reads GPRYCPSIETKVVRF.

The protein belongs to the MnmG family. As to quaternary structure, homodimer. Heterotetramer of two MnmE and two MnmG subunits. It depends on FAD as a cofactor.

It is found in the cytoplasm. Its function is as follows. NAD-binding protein involved in the addition of a carboxymethylaminomethyl (cmnm) group at the wobble position (U34) of certain tRNAs, forming tRNA-cmnm(5)s(2)U34. The polypeptide is tRNA uridine 5-carboxymethylaminomethyl modification enzyme MnmG (Lactobacillus delbrueckii subsp. bulgaricus (strain ATCC 11842 / DSM 20081 / BCRC 10696 / JCM 1002 / NBRC 13953 / NCIMB 11778 / NCTC 12712 / WDCM 00102 / Lb 14)).